The primary structure comprises 96 residues: Cystatin (96 aa).

In terms of domain architecture, Cystatin spans 22-65 (DFIKAALNETGTHAGRKYKVLRSSQQVVAGMKYTFYIVFEDDES). Asn29 carries an N-linked (GlcNAc...) asparagine glycan.

The protein belongs to the cystatin family. In terms of assembly, interacts with cathepsin L-like peptidase; the interaction results in inhibition of cathepsin L-like peptidase activity. As to expression, salivary gland. Midgut.

Its function is as follows. Cysteine proteinase inhibitor. Inhibits cathepsin L-like peptidase. Increases cell viability following apoptosis induction by staurosporine. Inhibits human cathepsin S (CTSS), human cathepsin L2 (CTSV), human cathepsin L (CTSL), human cathepsin B (CTSB) and papain. Functionally, (Microbial infection) Modulates dengue virus type 2 replication in salivary glands. The chain is Cystatin from Aedes aegypti (Yellowfever mosquito).